The sequence spans 150 residues: uncharacterized protein (150 aa).

Residues 19 to 39 (SLGMCVILIDGLIVLTAAFVF) form a helical membrane-spanning segment.

This sequence to B.subtilis YpjC, YqfU and YitT.

Its subcellular location is the cell membrane. This is an uncharacterized protein from Bacillus sp. (strain PS3).